Reading from the N-terminus, the 81-residue chain is Sulfur carrier protein TusA (81 aa).

Cys19 functions as the Cysteine persulfide intermediate in the catalytic mechanism.

It belongs to the sulfur carrier protein TusA family.

The protein resides in the cytoplasm. Its function is as follows. Sulfur carrier protein which probably makes part of a sulfur-relay system. In Shewanella sp. (strain MR-4), this protein is Sulfur carrier protein TusA.